A 58-amino-acid polypeptide reads, in one-letter code: MSTIKIKQVKSRIGAPADQKRTLDALGLRKLNRVVEHESTPSILGMVDKVKHLVAIVK.

This sequence belongs to the universal ribosomal protein uL30 family. Part of the 50S ribosomal subunit.

This chain is Large ribosomal subunit protein uL30, found in Bacteroides fragilis (strain ATCC 25285 / DSM 2151 / CCUG 4856 / JCM 11019 / LMG 10263 / NCTC 9343 / Onslow / VPI 2553 / EN-2).